The sequence spans 1024 residues: Gamma-tubulin complex component 5 (1024 aa).

Disordered regions lie at residues 155–203 (IGPY…LDPC) and 521–545 (TENE…SSRQ). Positions 189–203 (TPLEEQDQNRKLDPC) are enriched in basic and acidic residues. Residues 531 to 543 (ASASSGSDQGPSS) show a composition bias toward low complexity.

It belongs to the TUBGCP family. As to quaternary structure, component of the gamma-tubulin ring complex (gTuRC) consisting of TUBGCP2, TUBGCP3, TUBGCP4, TUBGCP5 and TUBGCP6 and gamma-tubulin TUBG1 or TUBG2. TUBGCP2, TUBGCP3, TUBGCP4, TUBGCP5 and TUBGCP6 assemble in a 5:5:2:1:1 stoichiometry; each is associated with a gamma-tubulin, thereby arranging 14 gamma-tubulins in a helical manner. Gamma-tubulin at the first position is blocked by TUBGCP3 at the last position, allowing 13 protafilaments to grow into a microtubule. The gTuRC (via TUBGCP3 and TUBGCP6) interacts with ACTB and MZT1; the interactions form a luminal bridge that stabilizes the initial structure during complex assembly. The gTuRC (via TUBGCP2) interacts with MZT2A/MZT2B and CDK5RAP2 (via CM1 motif); the interactions play a role in gTuRC activation. In terms of tissue distribution, widely expressed, with highest levels in heart and skeletal muscle and moderate levels in brain.

Its subcellular location is the cytoplasm. It localises to the cytoskeleton. The protein localises to the microtubule organizing center. It is found in the centrosome. In terms of biological role, component of the gamma-tubulin ring complex (gTuRC) which mediates microtubule nucleation. The gTuRC regulates the minus-end nucleation of alpha-beta tubulin heterodimers that grow into microtubule protafilaments, a critical step in centrosome duplication and spindle formation. The chain is Gamma-tubulin complex component 5 (TUBGCP5) from Homo sapiens (Human).